A 110-amino-acid chain; its full sequence is Protein RALF-like 19 (110 aa).

Residues 1–23 (MGIKILLILGLLTLAVVAESANA) form the signal peptide. Residues 24-58 (TWTLTKSCVNGQGCIGEDGELDYLMDSETNRRQLA) constitute a propeptide, removed in mature form. Cystine bridges form between C76/C86 and C99/C105.

The protein belongs to the plant rapid alkalinization factor (RALF) family. Post-translationally, proteolytically cleaved, probably by S1P, a subtilisin-like serine protease (subtilase).

It is found in the secreted. Cell signaling peptide that may regulate plant stress, growth, and development. Mediates a rapid alkalinization of extracellular space by mediating a transient increase in the cytoplasmic Ca(2+) concentration leading to a calcium-dependent signaling events through a cell surface receptor and a concomitant activation of some intracellular mitogen-activated protein kinases. This chain is Protein RALF-like 19 (RALFL19), found in Arabidopsis thaliana (Mouse-ear cress).